We begin with the raw amino-acid sequence, 307 residues long: Regulating synaptic membrane exocytosis protein 3 (307 aa).

Positions 86–120 are disordered; the sequence is STETGIAVEMRSRVTRQGSRESTDGSTNSNSSEGT. Residues 109–119 are compositionally biased toward polar residues; it reads DGSTNSNSSEG. In terms of domain architecture, C2 spans 155–273; sequence PMGDVHIAIM…DLSAAVTGWY (119 aa). Ser294 and Ser297 each carry phosphoserine.

As to quaternary structure, binds PPFIA3. Does not bind RAB3.

It is found in the synapse. Functionally, regulates synaptic membrane exocytosis. The protein is Regulating synaptic membrane exocytosis protein 3 (Rims3) of Mus musculus (Mouse).